Reading from the N-terminus, the 116-residue chain is Ribonuclease P protein component (116 aa).

It belongs to the RnpA family. In terms of assembly, consists of a catalytic RNA component (M1 or rnpB) and a protein subunit.

It catalyses the reaction Endonucleolytic cleavage of RNA, removing 5'-extranucleotides from tRNA precursor.. Functionally, RNaseP catalyzes the removal of the 5'-leader sequence from pre-tRNA to produce the mature 5'-terminus. It can also cleave other RNA substrates such as 4.5S RNA. The protein component plays an auxiliary but essential role in vivo by binding to the 5'-leader sequence and broadening the substrate specificity of the ribozyme. The sequence is that of Ribonuclease P protein component from Gluconacetobacter diazotrophicus (strain ATCC 49037 / DSM 5601 / CCUG 37298 / CIP 103539 / LMG 7603 / PAl5).